The following is a 295-amino-acid chain: Protein SSO2 (295 aa).

Topologically, residues 1 to 269 (MSNANPYENN…ARKARKNKIR (269 aa)) are cytoplasmic. Phosphoserine occurs at positions 31 and 34. The stretch at 39–100 (AFMNKINSIN…ATDLQYQLKA (62 aa)) forms a coiled coil. The region spanning 194-256 (LAEVQARHQE…EQGVGHTNKA (63 aa)) is the t-SNARE coiled-coil homology domain. Residues 270 to 291 (CLIICFIIFAIVVVVVVVPSVV) form a helical; Anchor for type IV membrane protein membrane-spanning segment. At 292-295 (ETRK) the chain is on the extracellular side.

This sequence belongs to the syntaxin family.

The protein localises to the membrane. Required for vesicle fusion with the plasma membrane. The chain is Protein SSO2 (SSO2) from Saccharomyces cerevisiae (strain ATCC 204508 / S288c) (Baker's yeast).